We begin with the raw amino-acid sequence, 110 residues long: uncharacterized protein (110 aa).

A disordered region spans residues 85-110; it reads ARKAERPSQGGKDYNGTAKSAQSTTV. Residues 101 to 110 are compositionally biased toward polar residues; the sequence is TAKSAQSTTV.

This is an uncharacterized protein from Saccharomyces cerevisiae (strain ATCC 204508 / S288c) (Baker's yeast).